Reading from the N-terminus, the 395-residue chain is Elongation factor Tu (395 aa).

Residues 10–204 form the tr-type G domain; sequence KPHLNIGTIG…TVDNYIKEPI (195 aa). A G1 region spans residues 19 to 26; that stretch reads GHVDHGKT. 19–26 is a binding site for GTP; it reads GHVDHGKT. Thr26 serves as a coordination point for Mg(2+). Positions 60–64 are G2; the sequence is GITIN. Positions 81 to 84 are G3; sequence DCPG. Residues 81-85 and 136-139 each bind GTP; these read DCPGH and NKVD. The G4 stretch occupies residues 136–139; the sequence is NKVD. The segment at 174–176 is G5; it reads SAL.

It belongs to the TRAFAC class translation factor GTPase superfamily. Classic translation factor GTPase family. EF-Tu/EF-1A subfamily. As to quaternary structure, monomer.

The protein localises to the cytoplasm. It catalyses the reaction GTP + H2O = GDP + phosphate + H(+). Functionally, GTP hydrolase that promotes the GTP-dependent binding of aminoacyl-tRNA to the A-site of ribosomes during protein biosynthesis. The sequence is that of Elongation factor Tu from Karelsulcia muelleri (strain GWSS) (Sulcia muelleri).